Here is a 195-residue protein sequence, read N- to C-terminus: Imidazoleglycerol-phosphate dehydratase (195 aa).

This sequence belongs to the imidazoleglycerol-phosphate dehydratase family.

It localises to the cytoplasm. It carries out the reaction D-erythro-1-(imidazol-4-yl)glycerol 3-phosphate = 3-(imidazol-4-yl)-2-oxopropyl phosphate + H2O. The protein operates within amino-acid biosynthesis; L-histidine biosynthesis; L-histidine from 5-phospho-alpha-D-ribose 1-diphosphate: step 6/9. In Bordetella avium (strain 197N), this protein is Imidazoleglycerol-phosphate dehydratase.